A 72-amino-acid chain; its full sequence is SRY-related protein AES6 (72 aa).

The segment at residues 1-69 (VKRPMNAFMV…KHMADYPDYK (69 aa)) is a DNA-binding region (HMG box).

The protein localises to the nucleus. The sequence is that of SRY-related protein AES6 from Alligator mississippiensis (American alligator).